Reading from the N-terminus, the 127-residue chain is Large ribosomal subunit protein bL12 (127 aa).

This sequence belongs to the bacterial ribosomal protein bL12 family. Homodimer. Part of the ribosomal stalk of the 50S ribosomal subunit. Forms a multimeric L10(L12)X complex, where L10 forms an elongated spine to which 2 to 4 L12 dimers bind in a sequential fashion. Binds GTP-bound translation factors.

Functionally, forms part of the ribosomal stalk which helps the ribosome interact with GTP-bound translation factors. Is thus essential for accurate translation. The sequence is that of Large ribosomal subunit protein bL12 from Chloroherpeton thalassium (strain ATCC 35110 / GB-78).